A 246-amino-acid chain; its full sequence is Hydroxyacylglutathione hydrolase (246 aa).

Zn(2+) contacts are provided by histidine 58, histidine 60, aspartate 62, histidine 63, histidine 117, aspartate 137, and histidine 175.

The protein belongs to the metallo-beta-lactamase superfamily. Glyoxalase II family. As to quaternary structure, monomer. Zn(2+) serves as cofactor.

The enzyme catalyses an S-(2-hydroxyacyl)glutathione + H2O = a 2-hydroxy carboxylate + glutathione + H(+). The protein operates within secondary metabolite metabolism; methylglyoxal degradation; (R)-lactate from methylglyoxal: step 2/2. Thiolesterase that catalyzes the hydrolysis of S-D-lactoyl-glutathione to form glutathione and D-lactic acid. This Prochlorococcus marinus (strain MIT 9301) protein is Hydroxyacylglutathione hydrolase.